Reading from the N-terminus, the 317-residue chain is MMQPNAKLLSPSAKFLPSPIEPPQHNRRTTVGAPPSLERNCKLSRRNLSKSSLLLLLTTQTTLTPLLDFSKAQADTIANPNLTNCENRIPTKKAFIDVSIDGEPIGRIIIGLYGDDVPAGTARFSSIVSGKAGITYRRKDFVKIMPGYVQHGGIRSYGVDAERATAAVGSLQNLIEEWERGKRGEICNVNKAGSVGIVVRDPSKPPPKTKLVARNGKLVVEEEVIAVGPNGTEFVITAVDSPELEDSVLVIGKVLEGMGVVEKMREVKTVRDNTSSPYFRVAKVIGDKRAVVAERGFNRPYSKVVVTNCGLIESQTL.

A disordered region spans residues 1-37; that stretch reads MMQPNAKLLSPSAKFLPSPIEPPQHNRRTTVGAPPSL. A PPIase cyclophilin-type domain is found at 95–311; it reads FIDVSIDGEP…SKVVVTNCGL (217 aa).

This sequence belongs to the cyclophilin-type PPIase family. As to expression, ubiquitous. Lower levels of expression in roots.

The protein resides in the plastid. The protein localises to the chloroplast thylakoid. The enzyme catalyses [protein]-peptidylproline (omega=180) = [protein]-peptidylproline (omega=0). PPIases accelerate the folding of proteins. It catalyzes the cis-trans isomerization of proline imidic peptide bonds in oligopeptides. This chain is Peptidyl-prolyl cis-trans isomerase CYP26-2, chloroplastic (CYP26-2), found in Arabidopsis thaliana (Mouse-ear cress).